The following is a 466-amino-acid chain: Citrate synthase, mitochondrial (466 aa).

Residues 1–27 constitute a mitochondrion transit peptide; the sequence is MALLTAAARLLGTKNASCLVLAARHAS. An SIFI-degron motif is present at residues 2-21; sequence ALLTAAARLLGTKNASCLVL. The residue at position 57 (lysine 57) is an N6-succinyllysine. The residue at position 76 (lysine 76) is an N6-acetyllysine; alternate. Lysine 76 is modified (N6-succinyllysine; alternate). 2 positions are modified to N6-succinyllysine: lysine 103 and lysine 193. The active site involves histidine 301. N6-acetyllysine; alternate occurs at positions 321 and 327. N6-succinyllysine; alternate is present on residues lysine 321 and lysine 327. The active site involves histidine 347. Position 356 (arginine 356) interacts with oxaloacetate. At lysine 375 the chain carries N6-acetyllysine; alternate. At lysine 375 the chain carries N6-succinyllysine; alternate. Lysine 382 is subject to N6-acetyllysine. Lysine 393 is subject to N6-acetyllysine; alternate. At lysine 393 the chain carries N6-succinyllysine; alternate. Lysine 395 is subject to N6,N6,N6-trimethyllysine. Aspartate 402 is an active-site residue. Oxaloacetate contacts are provided by arginine 428 and arginine 448. At lysine 450 the chain carries N6-succinyllysine. Lysine 459 carries the N6-acetyllysine; alternate modification. Lysine 459 is subject to N6-succinyllysine; alternate.

Belongs to the citrate synthase family. As to quaternary structure, homodimer. Methylated. Trimethylation at Lys-395 by CSKMT decreases citrate synthase activity. Post-translationally, in response to mitochondrial stress, the precursor protein is ubiquitinated by the SIFI complex in the cytoplasm before mitochondrial import, leading to its degradation. Within the SIFI complex, UBR4 initiates ubiquitin chain that are further elongated or branched by KCMF1.

It is found in the mitochondrion matrix. It catalyses the reaction oxaloacetate + acetyl-CoA + H2O = citrate + CoA + H(+). Its pathway is carbohydrate metabolism; tricarboxylic acid cycle; isocitrate from oxaloacetate: step 1/2. Functionally, key enzyme of the Krebs tricarboxylic acid cycle which catalyzes the synthesis of citrate from acetyl coenzyme A and oxaloacetate. The protein is Citrate synthase, mitochondrial (CS) of Homo sapiens (Human).